The chain runs to 523 residues: Galactarate dehydratase (L-threo-forming) (523 aa).

Belongs to the UxaA family. Homodimer. It depends on Fe(2+) as a cofactor.

The catalysed reaction is galactarate = 5-dehydro-4-deoxy-D-glucarate + H2O. Its pathway is carbohydrate acid metabolism; galactarate degradation; D-glycerate from galactarate: step 1/3. In terms of biological role, catalyzes the dehydration of galactarate to form 5-dehydro-4-deoxy-D-glucarate (5-KDG). The chain is Galactarate dehydratase (L-threo-forming) from Escherichia coli (strain K12).